The following is an 89-amino-acid chain: Acylphosphatase (89 aa).

Positions 4–89 constitute an Acylphosphatase-like domain; that stretch reads SRRFLVSGTV…EQPPEGFRVL (86 aa). Active-site residues include R19 and N37.

It belongs to the acylphosphatase family.

The catalysed reaction is an acyl phosphate + H2O = a carboxylate + phosphate + H(+). The protein is Acylphosphatase (acyP) of Alkalilimnicola ehrlichii (strain ATCC BAA-1101 / DSM 17681 / MLHE-1).